Here is a 106-residue protein sequence, read N- to C-terminus: Insulin-like peptide 03 (106 aa).

The first 18 residues, 1-18, serve as a signal peptide directing secretion; the sequence is MLFYFGLAVIFLIDSSQT. Positions 19-34 are excised as a propeptide; that stretch reads QTLYKVNEVGGSQVDR. 3 disulfide bridges follow: Cys37-Cys93, Cys49-Cys106, and Cys92-Cys97. Positions 52–82 are cleaved as a propeptide — c peptide; the sequence is KKRQNIPRKYGRDPNNILEKEEFAKRFLRVR.

It belongs to the insulin family.

It is found in the secreted. Its function is as follows. Insulin decreases blood glucose concentration. May have evolved to activate insulin receptors (INSR) in vertebrates. Molecular docking studies reveals unique interaction with the human insulin receptor. In vivo, insulin-like peptide injection reduces blood glucose levels in two models of zebrafish diabetes (streptozotocin- and glucose-induced). Also shorter swimming distance of zebrafish larvae, an effect which is not observed with human insulin. In Exaiptasia diaphana (Tropical sea anemone), this protein is Insulin-like peptide 03.